The following is a 258-amino-acid chain: Triosephosphate isomerase (258 aa).

Residue asparagine 11–lysine 13 participates in substrate binding. Histidine 101 (electrophile) is an active-site residue. Glutamate 173 serves as the catalytic Proton acceptor. Substrate contacts are provided by residues glycine 179, serine 219, and glycine 240–glycine 241.

Belongs to the triosephosphate isomerase family. As to quaternary structure, homodimer.

The protein resides in the cytoplasm. It carries out the reaction D-glyceraldehyde 3-phosphate = dihydroxyacetone phosphate. Its pathway is carbohydrate biosynthesis; gluconeogenesis. It functions in the pathway carbohydrate degradation; glycolysis; D-glyceraldehyde 3-phosphate from glycerone phosphate: step 1/1. Involved in the gluconeogenesis. Catalyzes stereospecifically the conversion of dihydroxyacetone phosphate (DHAP) to D-glyceraldehyde-3-phosphate (G3P). This chain is Triosephosphate isomerase, found in Streptomyces coelicolor (strain ATCC BAA-471 / A3(2) / M145).